We begin with the raw amino-acid sequence, 1027 residues long: Error-prone DNA polymerase (1027 aa).

Belongs to the DNA polymerase type-C family. DnaE2 subfamily.

Its subcellular location is the cytoplasm. It carries out the reaction DNA(n) + a 2'-deoxyribonucleoside 5'-triphosphate = DNA(n+1) + diphosphate. In terms of biological role, DNA polymerase involved in damage-induced mutagenesis and translesion synthesis (TLS). It is not the major replicative DNA polymerase. This is Error-prone DNA polymerase from Dechloromonas aromatica (strain RCB).